The chain runs to 70 residues: Homeobox protein OTX2 (70 aa).

The interval 34-70 (HQLPGPGATLSPMGTNAVTSHLNQSPASLSTQGYGAS) is disordered. Polar residues predominate over residues 45–70 (PMGTNAVTSHLNQSPASLSTQGYGAS).

Belongs to the paired homeobox family. Bicoid subfamily.

It is found in the nucleus. In terms of biological role, transcription factor probably involved in the development of the brain and the sense organs. Can bind to the bicoid/BCD target sequence (BTS): 5'-TCTAATCCC-3'. The protein is Homeobox protein OTX2 (Otx2) of Rattus norvegicus (Rat).